Reading from the N-terminus, the 337-residue chain is Biotin synthase (337 aa).

The Radical SAM core domain maps to A58–A288. [4Fe-4S] cluster contacts are provided by C76, C80, and C83. C155, C216, and K286 together coordinate [2Fe-2S] cluster.

This sequence belongs to the radical SAM superfamily. Biotin synthase family. Homodimer. [4Fe-4S] cluster serves as cofactor. Requires [2Fe-2S] cluster as cofactor.

It catalyses the reaction (4R,5S)-dethiobiotin + (sulfur carrier)-SH + 2 reduced [2Fe-2S]-[ferredoxin] + 2 S-adenosyl-L-methionine = (sulfur carrier)-H + biotin + 2 5'-deoxyadenosine + 2 L-methionine + 2 oxidized [2Fe-2S]-[ferredoxin]. Its pathway is cofactor biosynthesis; biotin biosynthesis; biotin from 7,8-diaminononanoate: step 2/2. In terms of biological role, catalyzes the conversion of dethiobiotin (DTB) to biotin by the insertion of a sulfur atom into dethiobiotin via a radical-based mechanism. In Pelodictyon phaeoclathratiforme (strain DSM 5477 / BU-1), this protein is Biotin synthase.